Consider the following 250-residue polypeptide: Hydroxyacylglutathione hydrolase (250 aa).

Residues His-53, His-55, Asp-57, His-58, His-110, Asp-127, and His-165 each contribute to the Zn(2+) site.

The protein belongs to the metallo-beta-lactamase superfamily. Glyoxalase II family. As to quaternary structure, monomer. Zn(2+) is required as a cofactor.

The enzyme catalyses an S-(2-hydroxyacyl)glutathione + H2O = a 2-hydroxy carboxylate + glutathione + H(+). It functions in the pathway secondary metabolite metabolism; methylglyoxal degradation; (R)-lactate from methylglyoxal: step 2/2. Its function is as follows. Thiolesterase that catalyzes the hydrolysis of S-D-lactoyl-glutathione to form glutathione and D-lactic acid. In Photorhabdus laumondii subsp. laumondii (strain DSM 15139 / CIP 105565 / TT01) (Photorhabdus luminescens subsp. laumondii), this protein is Hydroxyacylglutathione hydrolase.